Reading from the N-terminus, the 485-residue chain is NADH-quinone oxidoreductase subunit N (485 aa).

Helical transmembrane passes span 8–28 (LIALLPLLIVGLTVVVVMLSI), 35–55 (FLNATLSVIGLNAALVSLWFV), 71–91 (GFAMLYTGLVLLASLATCTFA), 105–125 (FYLLVLIAALGGILLANANHL), 127–147 (SLFLGIELISLPLFGLVGYAF), 159–179 (YTILSAAASSFLLFGMALVYA), 203–223 (LLAGFGLMIVGLGFKLSLVPF), 235–255 (PAPVSTFLATASKIAIFGVVM), 271–291 (VVLAIIAFASIIFGNLMALSQ), 297–317 (LLGYSSISHLGYLLVALIALQ), 326–346 (VGVYLAGYLFSSLGAFGVVSL), 373–393 (AAVMTVMMLSLAGIPMTLGFI), 408–430 (WWLVGAVVVGSAIGLYYYLRVAV), and 455–475 (IVVLISALLVLVLGVWPQPLI).

This sequence belongs to the complex I subunit 2 family. As to quaternary structure, NDH-1 is composed of 13 different subunits. Subunits NuoA, H, J, K, L, M, N constitute the membrane sector of the complex.

It is found in the cell inner membrane. It catalyses the reaction a quinone + NADH + 5 H(+)(in) = a quinol + NAD(+) + 4 H(+)(out). NDH-1 shuttles electrons from NADH, via FMN and iron-sulfur (Fe-S) centers, to quinones in the respiratory chain. The immediate electron acceptor for the enzyme in this species is believed to be ubiquinone. Couples the redox reaction to proton translocation (for every two electrons transferred, four hydrogen ions are translocated across the cytoplasmic membrane), and thus conserves the redox energy in a proton gradient. The protein is NADH-quinone oxidoreductase subunit N of Escherichia coli (strain ATCC 8739 / DSM 1576 / NBRC 3972 / NCIMB 8545 / WDCM 00012 / Crooks).